A 297-amino-acid polypeptide reads, in one-letter code: Homoserine kinase (297 aa).

ATP is bound at residue 82–92 (PVSRGLGSSAA).

The protein belongs to the GHMP kinase family. Homoserine kinase subfamily.

It localises to the cytoplasm. The catalysed reaction is L-homoserine + ATP = O-phospho-L-homoserine + ADP + H(+). The protein operates within amino-acid biosynthesis; L-threonine biosynthesis; L-threonine from L-aspartate: step 4/5. Its function is as follows. Catalyzes the ATP-dependent phosphorylation of L-homoserine to L-homoserine phosphate. This chain is Homoserine kinase, found in Clostridium botulinum (strain Okra / Type B1).